The primary structure comprises 528 residues: Catalase (528 aa).

Positions 1-22 are enriched in basic and acidic residues; that stretch reads MADRREKSADQMKLWKESRANQ. Positions 1-32 are disordered; the sequence is MADRREKSADQMKLWKESRANQKPDVLTTGGG. Active-site residues include histidine 75 and asparagine 148. NADP(+) contacts are provided by histidine 194, serine 201, arginine 203, asparagine 213, lysine 237, tryptophan 303, histidine 305, and lysine 306. A heme-binding site is contributed by tyrosine 358. A Microbody targeting signal; atypical motif is present at residues 525-528; sequence KANL.

Belongs to the catalase family. In terms of assembly, homotetramer. Heme is required as a cofactor. NADP(+) serves as cofactor.

It is found in the peroxisome matrix. The enzyme catalyses 2 H2O2 = O2 + 2 H2O. Functionally, catalyzes the degradation of hydrogen peroxide (H(2)O(2)) generated by peroxisomal oxidases to water and oxygen, thereby protecting cells from the toxic effects of hydrogen peroxide. The protein is Catalase (cat) of Glandirana rugosa (Japanese wrinkled frog).